The sequence spans 67 residues: Large ribosomal subunit protein uL29c (67 aa).

This sequence belongs to the universal ribosomal protein uL29 family.

It is found in the plastid. The protein resides in the chloroplast. The polypeptide is Large ribosomal subunit protein uL29c (rpl29) (Porphyra purpurea (Red seaweed)).